The primary structure comprises 439 residues: Paraneoplastic antigen-like protein 8A (439 aa).

The interval serine 208–valine 439 is disordered. Residues leucine 231–asparagine 249 are compositionally biased toward basic residues. 3 stretches are compositionally biased toward basic and acidic residues: residues glycine 314–alanine 326, serine 395–alanine 404, and alanine 423–valine 439.

Belongs to the PNMA family.

In Homo sapiens (Human), this protein is Paraneoplastic antigen-like protein 8A.